A 327-amino-acid chain; its full sequence is Probable NAD(P)H-dependent D-xylose reductase xyl1 (327 aa).

Y57 serves as the catalytic Proton donor. Residue H119 coordinates substrate. NAD(+)-binding positions include 173–174 (SN), 222–231 (SSLGPQSFIE), and 278–288 (KSNNPDRLAQN).

The protein belongs to the aldo/keto reductase family.

It carries out the reaction xylitol + NAD(+) = D-xylose + NADH + H(+). It catalyses the reaction xylitol + NADP(+) = D-xylose + NADPH + H(+). The protein operates within carbohydrate metabolism; D-xylose degradation. Functionally, catalyzes the initial reaction in the xylose utilization pathway by reducing D-xylose into xylitol. Xylose is a major component of hemicelluloses such as xylan. Most fungi utilize D-xylose via three enzymatic reactions, xylose reductase (XR), xylitol dehydrogenase (XDH), and xylulokinase, to form xylulose 5-phosphate, which enters pentose phosphate pathway. In Arthroderma otae (strain ATCC MYA-4605 / CBS 113480) (Microsporum canis), this protein is Probable NAD(P)H-dependent D-xylose reductase xyl1 (xyl1).